Reading from the N-terminus, the 564-residue chain is Protein CPR-5 (564 aa).

Positions 1 to 87 (MEALLLPPSP…TSNSNSTKRV (87 aa)) are disordered. The segment covering 12-28 (PQNQITNPANSKPNHQS) has biased composition (polar residues). Residues 29–38 (GDVHKDETMM) show a composition bias toward basic and acidic residues. Residues 69 to 84 (SSSYCSTSSTSNSNST) are compositionally biased toward low complexity. Helical transmembrane passes span 347-367 (IMDWLLVSVFSMLASMVLGVY), 411-431 (VRVWVQIFFGVLMIIVFTYFL), 443-463 (PISFIVLFLGIFCGVSGKLCV), 472-492 (LWLIVWEVFCLLQFVANVFTL), and 526-546 (VYVVILFVLPVINGLLPFATF).

As to quaternary structure, interacts with SIM and SMR1. In terms of tissue distribution, ubiquitous.

Its subcellular location is the membrane. The protein localises to the nucleus membrane. Functionally, may play a role in transcriptional processes. Negatively regulates the senescence and chlorotic lesions induced by biotic (e.g. pathogens) and abiotic (e.g. sugars, darkness) agents, probably by controlling programmed cell death (pcd). Negative regulator of plant programmed cell death (PCD) and effector-triggered immunity (ETI). Promotes cell division and endoreduplication (e.g. in trichomes). This chain is Protein CPR-5, found in Arabidopsis thaliana (Mouse-ear cress).